Here is a 185-residue protein sequence, read N- to C-terminus: Lysine-rich arabinogalactan protein 17 (185 aa).

The first 21 residues, 1–21 (MTRNILLTVTLICIVFITVGG), serve as a signal peptide directing secretion. Residues 25–160 (ATAPIHSPST…FSPAADDQSG (136 aa)) are disordered. Positions 43–68 (SPAISPAAPTPESTEAPAKTPVEAPV) are enriched in low complexity. Residues 69–88 (EAPPSPTPASTPQISPPAPS) are compositionally biased toward pro residues. Basic residues predominate over residues 111–122 (TKHKKKTKKHKT). Residues 135–146 (PPAPPGEAPGPG) are compositionally biased toward pro residues. A lipid anchor (GPI-anchor amidated serine) is attached at Ser159. The propeptide at 160-185 (GAQRISVVIQMVGAAAIAWSLLVLAF) is removed in mature form.

Belongs to the lysine-rich AGP family. O-glycosylated on the hydroxyproline residues. In terms of tissue distribution, predominantly expressed in open flowers. Also expressed in leaves and stems, and at a lower level in roots.

The protein resides in the cell membrane. Its function is as follows. Proteoglycan that seems to be implicated in diverse developmental roles such as differentiation, cell-cell recognition, embryogenesis and programmed cell death. This is Lysine-rich arabinogalactan protein 17 (AGP17) from Arabidopsis thaliana (Mouse-ear cress).